Consider the following 162-residue polypeptide: Auxin-responsive protein SAUR36 (162 aa).

Belongs to the ARG7 family. Expressed in embryo, endosperm, growing hypocotyls and shoot apical meristems.

Acts a positive regulator of leaf senescence and may mediate auxin-induced leaf senescence. Plays a role in the regulation of seed germination by gibberellins and abscisic acid (ABA). Plays a role in the regulation of light-dependent hypocotyl elongation. This chain is Auxin-responsive protein SAUR36, found in Arabidopsis thaliana (Mouse-ear cress).